A 151-amino-acid chain; its full sequence is Ribosomal RNA large subunit methyltransferase H (151 aa).

S-adenosyl-L-methionine contacts are provided by residues Ala101 and 119–124; that span reads LSEMTF.

Belongs to the RNA methyltransferase RlmH family. As to quaternary structure, homodimer.

The protein localises to the cytoplasm. The catalysed reaction is pseudouridine(1915) in 23S rRNA + S-adenosyl-L-methionine = N(3)-methylpseudouridine(1915) in 23S rRNA + S-adenosyl-L-homocysteine + H(+). Functionally, specifically methylates the pseudouridine at position 1915 (m3Psi1915) in 23S rRNA. The protein is Ribosomal RNA large subunit methyltransferase H of Helicobacter pylori (strain G27).